Here is a 223-residue protein sequence, read N- to C-terminus: Imidazoleglycerol-phosphate dehydratase (223 aa).

This sequence belongs to the imidazoleglycerol-phosphate dehydratase family.

It carries out the reaction D-erythro-1-(imidazol-4-yl)glycerol 3-phosphate = 3-(imidazol-4-yl)-2-oxopropyl phosphate + H2O. It participates in amino-acid biosynthesis; L-histidine biosynthesis; L-histidine from 5-phospho-alpha-D-ribose 1-diphosphate: step 6/9. The chain is Imidazoleglycerol-phosphate dehydratase (HIS3) from Torulaspora delbrueckii (Yeast).